Consider the following 389-residue polypeptide: Arrestin-C (389 aa).

The segment at 369–389 (AQQEPSGESQEALAAEGNEGS) is disordered.

It belongs to the arrestin family. In terms of assembly, homodimer; disulfide-linked in response to retinal illumination. Interacts with CXCR4; the interaction is dependent on the C-terminal phosphorylation of CXCR4 and modulates the calcium ion mobilization activity of CXCR4. Interacts with GPR84. In terms of tissue distribution, expressed in cone photoreceptors in the retina (at protein level).

It localises to the photoreceptor inner segment. It is found in the cell projection. Its subcellular location is the cilium. The protein localises to the photoreceptor outer segment. Its function is as follows. May play a role in an as yet undefined retina-specific signal transduction. Could bind to photoactivated-phosphorylated red/green opsins. This is Arrestin-C (ARR3) from Bos taurus (Bovine).